A 147-amino-acid chain; its full sequence is Large ribosomal subunit protein uL15 (147 aa).

The interval 1 to 46 is disordered; the sequence is MSIRLENLSYTPGARKEKHRKGRGHAAGKGKQAGRGQSGQKKRSTV. Positions 16 to 28 are enriched in basic residues; it reads KEKHRKGRGHAAG.

This sequence belongs to the universal ribosomal protein uL15 family. In terms of assembly, part of the 50S ribosomal subunit.

Its function is as follows. Binds to the 23S rRNA. This Mesomycoplasma hyopneumoniae (strain 232) (Mycoplasma hyopneumoniae) protein is Large ribosomal subunit protein uL15.